The primary structure comprises 182 residues: Ribulose bisphosphate carboxylase small subunit, chloroplastic 1 (182 aa).

Residues 1–42 constitute a chloroplast transit peptide; that stretch reads MASIMMNKSVVLSKECAKPLATPKVTLNKRGFATTIATKNRE.

The protein belongs to the RuBisCO small chain family. In terms of assembly, heterohexadecamer of 8 large and 8 small subunits.

The protein localises to the plastid. It localises to the chloroplast. Functionally, ruBisCO catalyzes two reactions: the carboxylation of D-ribulose 1,5-bisphosphate, the primary event in carbon dioxide fixation, as well as the oxidative fragmentation of the pentose substrate. Both reactions occur simultaneously and in competition at the same active site. Although the small subunit is not catalytic it is essential for maximal activity. In Acetabularia acetabulum (Mermaid's wine glass), this protein is Ribulose bisphosphate carboxylase small subunit, chloroplastic 1.